The sequence spans 340 residues: MSLAAKLIIYNYYAKYNEVHDVYGESYHHYRIVQEYLSESYVNGMSCIERDVTAMRRLKSGSCTFDEAVKMIDAGDSIKSLSHWFSTSETMGIDDNVREVLEQIDAVVPVSVRVQNGWQIFSLNNFEREISQDMLDCLQIILGRFEYFMRNGKLLRIANVFNPNNDVVGWWYNKFCVVTYVHRIMYRSVPAELVPRLSEAVKKFIRLRKSDYDDRLHVDESYNCPRVIAEMYGRFCGIGKEHFSKHKLSCMHILFQYLRGKTTQEEKSFPCYRVIKDFGRQCKDVYKNLKDVFDLLHAHSMSDKDKNSLMDLLCVMDCEEIDVDCFYYIFESFLNNKHLQ.

In terms of biological role, plays an essential role in nucleocapsid egress from the host nucleus to form the budded virion (BV). Does not participate in nucleocapsid formation. In Autographa californica nuclear polyhedrosis virus (AcMNPV), this protein is Protein AC11.